The chain runs to 239 residues: Ankyrin repeat domain-containing protein 49 (239 aa).

A Phosphoserine modification is found at Ser49. ANK repeat units follow at residues 73 to 103, 107 to 136, 140 to 169, and 173 to 206; these read DPSR…HVNT, DEYT…DVHA, DGWT…DINA, and GLLT…GLKN.

As to expression, widely expressed in fetus, at a high level in fetal liver, brain and lung.

The protein resides in the nucleus. In terms of biological role, induces HBG1 expression. May have a role in spermatogenesis where it promotes autophagy in response to serum starvation, via the NF-kappaB pathway. In Homo sapiens (Human), this protein is Ankyrin repeat domain-containing protein 49 (ANKRD49).